The primary structure comprises 156 residues: Lipoprotein signal peptidase (156 aa).

A helical membrane pass occupies residues 62–82; that stretch reads GNTVFMVLSAVIIAILSYTKI. Active-site residues include D115 and D133. A helical membrane pass occupies residues 126–146; sequence WPAFNLADLTITCGVIVFLAM.

It belongs to the peptidase A8 family.

It localises to the cell inner membrane. It carries out the reaction Release of signal peptides from bacterial membrane prolipoproteins. Hydrolyzes -Xaa-Yaa-Zaa-|-(S,diacylglyceryl)Cys-, in which Xaa is hydrophobic (preferably Leu), and Yaa (Ala or Ser) and Zaa (Gly or Ala) have small, neutral side chains.. The protein operates within protein modification; lipoprotein biosynthesis (signal peptide cleavage). Functionally, this protein specifically catalyzes the removal of signal peptides from prolipoproteins. The polypeptide is Lipoprotein signal peptidase (Anaplasma phagocytophilum (strain HZ)).